The chain runs to 119 residues: Ribonuclease P protein component (119 aa).

The protein belongs to the RnpA family. As to quaternary structure, consists of a catalytic RNA component (M1 or rnpB) and a protein subunit.

It catalyses the reaction Endonucleolytic cleavage of RNA, removing 5'-extranucleotides from tRNA precursor.. In terms of biological role, RNaseP catalyzes the removal of the 5'-leader sequence from pre-tRNA to produce the mature 5'-terminus. It can also cleave other RNA substrates such as 4.5S RNA. The protein component plays an auxiliary but essential role in vivo by binding to the 5'-leader sequence and broadening the substrate specificity of the ribozyme. The polypeptide is Ribonuclease P protein component (Aromatoleum aromaticum (strain DSM 19018 / LMG 30748 / EbN1) (Azoarcus sp. (strain EbN1))).